A 159-amino-acid polypeptide reads, in one-letter code: 2-C-methyl-D-erythritol 2,4-cyclodiphosphate synthase (159 aa).

2 residues coordinate a divalent metal cation: D8 and H10. Residues D8–H10 and H34–S35 contribute to the 4-CDP-2-C-methyl-D-erythritol 2-phosphate site. An a divalent metal cation-binding site is contributed by H42. 4-CDP-2-C-methyl-D-erythritol 2-phosphate-binding positions include D56–G58, F61–D65, A100–L106, T132–E135, F139, and R142.

Belongs to the IspF family. Homotrimer. A divalent metal cation is required as a cofactor.

The catalysed reaction is 4-CDP-2-C-methyl-D-erythritol 2-phosphate = 2-C-methyl-D-erythritol 2,4-cyclic diphosphate + CMP. The protein operates within isoprenoid biosynthesis; isopentenyl diphosphate biosynthesis via DXP pathway; isopentenyl diphosphate from 1-deoxy-D-xylulose 5-phosphate: step 4/6. In terms of biological role, involved in the biosynthesis of isopentenyl diphosphate (IPP) and dimethylallyl diphosphate (DMAPP), two major building blocks of isoprenoid compounds. Catalyzes the conversion of 4-diphosphocytidyl-2-C-methyl-D-erythritol 2-phosphate (CDP-ME2P) to 2-C-methyl-D-erythritol 2,4-cyclodiphosphate (ME-CPP) with a corresponding release of cytidine 5-monophosphate (CMP). This chain is 2-C-methyl-D-erythritol 2,4-cyclodiphosphate synthase, found in Escherichia coli O81 (strain ED1a).